The sequence spans 1312 residues: Probable histone-lysine N-methyltransferase lin-59 (1312 aa).

2 stretches are compositionally biased toward polar residues: residues 1 to 11 (MHGAGEQQQRY) and 25 to 36 (STSSHQYQQQGA). Disordered stretches follow at residues 1–41 (MHGA…QMHQ), 54–81 (TTTS…RQQG), 154–223 (QPSG…KPVD), 312–435 (EESK…PPPV), and 524–556 (KDNI…EPSE). Residues 54-68 (TTTSAAASTSSSGGS) show a composition bias toward low complexity. The span at 69 to 78 (NSSGGSGGHR) shows a compositional bias: gly residues. Residues 160-176 (PMSSNAPATTSSATPDS) are compositionally biased toward low complexity. Residues 200–210 (DHDDEEDDDGP) show a composition bias toward acidic residues. Positions 312–321 (EESKKKKDME) are enriched in basic and acidic residues. Residues 344-367 (ATRSTNSPDVTTSNLPEEPSTSTM) show a composition bias toward polar residues. The segment covering 371-382 (KENEDVEKVEGK) has biased composition (basic and acidic residues). The segment covering 383-394 (RRGRKPKKRRGF) has biased composition (basic residues). Composition is skewed to basic and acidic residues over residues 395–419 (HKES…DHLP) and 524–535 (KDNIKKEVKEES). The AWS domain maps to 590 to 635 (APSLTCGCTKGACTSDMDCLNRALRVQCSSDCSVPYCSNRRFWKED). One can recognise an SET domain in the interval 638 to 750 (NKLCVSNGPR…PNAEITVDKS (113 aa)). The disordered stretch occupies residues 913-934 (DNAPRARALSTSCPSPVPSKRG). The PHD-type zinc-finger motif lies at 967–1027 (AVRCICGALD…EYICDFCTNK (61 aa)). One can recognise a BAH domain in the interval 1100-1223 (NKYRFPKAAT…KTQRVFEKVP (124 aa)). The disordered stretch occupies residues 1248-1295 (RDFRPYDPSNPSPKPPKTSSIPSTSSIDPPQSSSDGLPEVDTKKLSKR). The segment covering 1264–1281 (KTSSIPSTSSIDPPQSSS) has biased composition (low complexity).

Belongs to the class V-like SAM-binding methyltransferase superfamily. Histone-lysine methyltransferase family. SET2 subfamily. In terms of tissue distribution, widely expressed throughout embryonic development and into adulthood.

It localises to the nucleus. It catalyses the reaction L-lysyl-[histone] + S-adenosyl-L-methionine = N(6)-methyl-L-lysyl-[histone] + S-adenosyl-L-homocysteine + H(+). Probable histone methyltransferase. Essential protein required to maintain expression of homeotic genes egl-5 and mab-5. May play an analogous role to the trithorax Group (trxG) proteins. TrxG proteins form multiprotein complexes that are required to maintain the transcriptionally active state of homeotic genes throughout development. May act via a modification of chromatin. The sequence is that of Probable histone-lysine N-methyltransferase lin-59 (lin-59) from Caenorhabditis elegans.